A 305-amino-acid chain; its full sequence is Translation initiation factor eIF2B subunit alpha (305 aa).

An N6-acetyllysine modification is found at Lys35.

Belongs to the eIF-2B alpha/beta/delta subunits family. As to quaternary structure, component of the translation initiation factor 2B (eIF2B) complex which is a heterodecamer of two sets of five different subunits: alpha, beta, gamma, delta and epsilon. Subunits alpha, beta and delta comprise a regulatory subcomplex and subunits epsilon and gamma comprise a catalytic subcomplex. Within the complex, the hexameric regulatory complex resides at the center, with the two heterodimeric catalytic subcomplexes bound on opposite sides.

It localises to the cytoplasm. The protein localises to the cytosol. Activated by the chemical integrated stress response (ISR) inhibitor ISRIB which stimulates guanine nucleotide exchange factor activity for both phosphorylated and unphosphorylated eIF2. In terms of biological role, acts as a component of the translation initiation factor 2B (eIF2B) complex, which catalyzes the exchange of GDP for GTP on eukaryotic initiation factor 2 (eIF2) gamma subunit. Its guanine nucleotide exchange factor activity is repressed when bound to eIF2 complex phosphorylated on the alpha subunit, thereby limiting the amount of methionyl-initiator methionine tRNA available to the ribosome and consequently global translation is repressed. This is Translation initiation factor eIF2B subunit alpha (Eif2b1) from Mus musculus (Mouse).